The primary structure comprises 447 residues: N-succinylarginine dihydrolase (447 aa).

Substrate-binding positions include 19-28 (AGLSFGNEAS), Asn110, and 137-138 (HR). Glu174 is an active-site residue. Arg213 contributes to the substrate binding site. The active site involves His249. 2 residues coordinate substrate: Asp251 and Asn364. Catalysis depends on Cys370, which acts as the Nucleophile.

The protein belongs to the succinylarginine dihydrolase family. Homodimer.

The enzyme catalyses N(2)-succinyl-L-arginine + 2 H2O + 2 H(+) = N(2)-succinyl-L-ornithine + 2 NH4(+) + CO2. It participates in amino-acid degradation; L-arginine degradation via AST pathway; L-glutamate and succinate from L-arginine: step 2/5. In terms of biological role, catalyzes the hydrolysis of N(2)-succinylarginine into N(2)-succinylornithine, ammonia and CO(2). This is N-succinylarginine dihydrolase from Yersinia pseudotuberculosis serotype O:1b (strain IP 31758).